Here is a 299-residue protein sequence, read N- to C-terminus: tRNA dimethylallyltransferase (299 aa).

Residue 11 to 18 coordinates ATP; it reads GPTAVGKT. Substrate is bound at residue 13-18; it reads TAVGKT. The interaction with substrate tRNA stretch occupies residues 36–39; it reads DSQQ.

It belongs to the IPP transferase family. Monomer. It depends on Mg(2+) as a cofactor.

It catalyses the reaction adenosine(37) in tRNA + dimethylallyl diphosphate = N(6)-dimethylallyladenosine(37) in tRNA + diphosphate. Catalyzes the transfer of a dimethylallyl group onto the adenine at position 37 in tRNAs that read codons beginning with uridine, leading to the formation of N6-(dimethylallyl)adenosine (i(6)A). This Streptococcus pyogenes serotype M1 protein is tRNA dimethylallyltransferase.